The sequence spans 267 residues: 3-methyl-2-oxobutanoate hydroxymethyltransferase (267 aa).

Residues aspartate 46 and aspartate 85 each coordinate Mg(2+). Residues 46–47 (DS), aspartate 85, and lysine 115 contribute to the 3-methyl-2-oxobutanoate site. Glutamate 117 contacts Mg(2+). Glutamate 184 serves as the catalytic Proton acceptor.

It belongs to the PanB family. Homodecamer; pentamer of dimers. It depends on Mg(2+) as a cofactor.

The protein localises to the cytoplasm. The catalysed reaction is 3-methyl-2-oxobutanoate + (6R)-5,10-methylene-5,6,7,8-tetrahydrofolate + H2O = 2-dehydropantoate + (6S)-5,6,7,8-tetrahydrofolate. It participates in cofactor biosynthesis; (R)-pantothenate biosynthesis; (R)-pantoate from 3-methyl-2-oxobutanoate: step 1/2. In terms of biological role, catalyzes the reversible reaction in which hydroxymethyl group from 5,10-methylenetetrahydrofolate is transferred onto alpha-ketoisovalerate to form ketopantoate. This Geotalea uraniireducens (strain Rf4) (Geobacter uraniireducens) protein is 3-methyl-2-oxobutanoate hydroxymethyltransferase.